The sequence spans 710 residues: Forkhead box protein P2 (710 aa).

A compositionally biased stretch (polar residues) spans 1–28 (MMQESATETISNSSMNQNGMSTLSSQLD). Disordered regions lie at residues 1–44 (MMQE…SSEV) and 272–334 (HSQE…TGAS). A compositionally biased stretch (basic and acidic residues) spans 273-283 (SQEDNGIKHGG). Over residues 287–300 (TTNNSSSTTSSTTS) the composition is skewed to low complexity. A compositionally biased stretch (polar residues) spans 310 to 319 (SIVNGQSSVL). Basic and acidic residues predominate over residues 321–332 (ARRDSSSHEETG). The C2H2-type zinc-finger motif lies at 343-366 (CKWPGCESICEDFGQFLKHLNNEH). Residues 383–404 (VQQLEIQLSKERERLQAMMTHL) form a leucine-zipper region. Residues 417-421 (PLNLV) are CTBP1-binding. Residues 433 to 454 (TSPQSLPQTPTTPTAPVTPITQ) show a composition bias toward low complexity. Positions 433 to 460 (TSPQSLPQTPTTPTAPVTPITQGPSVIT) are disordered. A DNA-binding region (fork-head) is located at residues 499–589 (RPPFTYATLI…SQKITGSPTL (91 aa)). 2 disordered regions span residues 644–663 (LDHIDSNGNSSPGCSPQPHI) and 673–710 (VIAEDEDCPMSLVTTANHSPELEDDREIEEEPLSEDLE). Acidic residues predominate over residues 694 to 710 (LEDDREIEEEPLSEDLE).

As to quaternary structure, forms homodimers and heterodimers with FOXP1 and FOXP4. Dimerization is required for DNA-binding. Interacts with CTBP1. Interacts with FOXP1. Interacts with TBR1. Interacts with ZMYM2.

The protein resides in the nucleus. Its function is as follows. Transcriptional repressor that may play a role in the specification and differentiation of lung epithelium. May also play a role in developing neural, gastrointestinal and cardiovascular tissues. Can act with CTBP1 to synergistically repress transcription but CTPBP1 is not essential. Plays a role in synapse formation by regulating SRPX2 levels. The protein is Forkhead box protein P2 (Foxp2) of Rattus norvegicus (Rat).